Here is a 637-residue protein sequence, read N- to C-terminus: Probable polypeptide N-acetylgalactosaminyltransferase 8 (637 aa).

Topologically, residues 1–6 (MMFWRK) are cytoplasmic. Residues 7–29 (LPKALFIGLTLAIAVNLLLVFSS) traverse the membrane as a helical; Signal-anchor for type II membrane protein segment. The Lumenal portion of the chain corresponds to 30-637 (KGTLQNLFTG…VRDWGQTNSQ (608 aa)). N-linked (GlcNAc...) asparagine glycans are attached at residues asparagine 85, asparagine 107, and asparagine 160. 5 disulfide bridges follow: cysteine 171-cysteine 404, cysteine 395-cysteine 474, cysteine 509-cysteine 525, cysteine 556-cysteine 571, and cysteine 599-cysteine 617. The catalytic subdomain A stretch occupies residues 180 to 294 (LPSLSVILIF…VGWAEPILAR (115 aa)). Positions 221 and 255 each coordinate substrate. Aspartate 278, histidine 280, and histidine 409 together coordinate Mn(2+). Positions 351 to 412 (PVKSPSIMGI…PCSRIAHLER (62 aa)) are catalytic subdomain B. Arginine 412 and tyrosine 417 together coordinate substrate. Residues 496 to 634 (GYGRMKNLLD…QHTVRDWGQT (139 aa)) form the Ricin B-type lectin domain.

Belongs to the glycosyltransferase 2 family. GalNAc-T subfamily. Mn(2+) is required as a cofactor. As to expression, widely expressed. Expressed in heart, skeletal muscle, kidney, liver, small intestine and placenta. Weakly expressed in colon, thymus, spleen, lung and leukocyte.

It is found in the golgi apparatus membrane. The enzyme catalyses L-seryl-[protein] + UDP-N-acetyl-alpha-D-galactosamine = a 3-O-[N-acetyl-alpha-D-galactosaminyl]-L-seryl-[protein] + UDP + H(+). The catalysed reaction is L-threonyl-[protein] + UDP-N-acetyl-alpha-D-galactosamine = a 3-O-[N-acetyl-alpha-D-galactosaminyl]-L-threonyl-[protein] + UDP + H(+). It functions in the pathway protein modification; protein glycosylation. Probably catalyzes the initial reaction in O-linked oligosaccharide biosynthesis, the transfer of an N-acetyl-D-galactosamine residue to a serine or threonine residue on the protein receptor. The sequence is that of Probable polypeptide N-acetylgalactosaminyltransferase 8 (GALNT8) from Homo sapiens (Human).